The primary structure comprises 546 residues: CTP synthase (546 aa).

The tract at residues 1 to 266 (MTTRYIFVTG…DDLVVKRFGL (266 aa)) is amidoligase domain. Residue serine 14 coordinates CTP. Serine 14 provides a ligand contact to UTP. ATP is bound by residues 15-20 (SLGKGI) and aspartate 72. Residues aspartate 72 and glutamate 140 each coordinate Mg(2+). Residues 147-149 (DIE), 187-192 (KTKPTQ), and lysine 223 each bind CTP. UTP is bound by residues 187-192 (KTKPTQ) and lysine 223. ATP is bound at residue 239–241 (KDV). The 252-residue stretch at 291–542 (VIGMVGKYIE…VAAASAHQKR (252 aa)) folds into the Glutamine amidotransferase type-1 domain. Glycine 352 serves as a coordination point for L-glutamine. Cysteine 379 functions as the Nucleophile; for glutamine hydrolysis in the catalytic mechanism. Residues 380-383 (LGMQ), glutamate 403, and arginine 470 contribute to the L-glutamine site. Residues histidine 515 and glutamate 517 contribute to the active site.

This sequence belongs to the CTP synthase family. In terms of assembly, homotetramer.

The enzyme catalyses UTP + L-glutamine + ATP + H2O = CTP + L-glutamate + ADP + phosphate + 2 H(+). It catalyses the reaction L-glutamine + H2O = L-glutamate + NH4(+). It carries out the reaction UTP + NH4(+) + ATP = CTP + ADP + phosphate + 2 H(+). The protein operates within pyrimidine metabolism; CTP biosynthesis via de novo pathway; CTP from UDP: step 2/2. Allosterically activated by GTP, when glutamine is the substrate; GTP has no effect on the reaction when ammonia is the substrate. The allosteric effector GTP functions by stabilizing the protein conformation that binds the tetrahedral intermediate(s) formed during glutamine hydrolysis. Inhibited by the product CTP, via allosteric rather than competitive inhibition. Its function is as follows. Catalyzes the ATP-dependent amination of UTP to CTP with either L-glutamine or ammonia as the source of nitrogen. Regulates intracellular CTP levels through interactions with the four ribonucleotide triphosphates. The chain is CTP synthase from Shewanella sp. (strain MR-4).